Reading from the N-terminus, the 93-residue chain is Small ribosomal subunit protein uS19 (93 aa).

This sequence belongs to the universal ribosomal protein uS19 family.

Its function is as follows. Protein S19 forms a complex with S13 that binds strongly to the 16S ribosomal RNA. The chain is Small ribosomal subunit protein uS19 from Paenarthrobacter aurescens (strain TC1).